The following is an 89-amino-acid chain: Translation initiation factor IF-1, chloroplastic (89 aa).

Residues 1–72 (MKKQDLIDME…TKGRIIYRLR (72 aa)) form the S1-like domain.

The protein belongs to the IF-1 family. As to quaternary structure, component of the 30S ribosomal translation pre-initiation complex which assembles on the 30S ribosome in the order IF-2 and IF-3, IF-1 and N-formylmethionyl-tRNA(fMet); mRNA recruitment can occur at any time during PIC assembly.

The protein resides in the plastid. The protein localises to the chloroplast. Functionally, one of the essential components for the initiation of protein synthesis. Stabilizes the binding of IF-2 and IF-3 on the 30S subunit to which N-formylmethionyl-tRNA(fMet) subsequently binds. Helps modulate mRNA selection, yielding the 30S pre-initiation complex (PIC). Upon addition of the 50S ribosomal subunit IF-1, IF-2 and IF-3 are released leaving the mature 70S translation initiation complex. This Angiopteris evecta (Mule's foot fern) protein is Translation initiation factor IF-1, chloroplastic.